Here is a 262-residue protein sequence, read N- to C-terminus: Ornithine carbamoyltransferase (262 aa).

Residues 3–7 (STRTR), Q30, R54, and 81–84 (HPTQ) each bind carbamoyl phosphate. Residues N114, D178, and 182–183 (SM) each bind L-ornithine. Carbamoyl phosphate contacts are provided by residues 219–222 (HCLP) and T247.

Belongs to the aspartate/ornithine carbamoyltransferase superfamily. OTCase family.

The protein localises to the cytoplasm. The catalysed reaction is carbamoyl phosphate + L-ornithine = L-citrulline + phosphate + H(+). The protein operates within amino-acid biosynthesis; L-arginine biosynthesis; L-arginine from L-ornithine and carbamoyl phosphate: step 1/3. Reversibly catalyzes the transfer of the carbamoyl group from carbamoyl phosphate (CP) to the N(epsilon) atom of ornithine (ORN) to produce L-citrulline. This is Ornithine carbamoyltransferase (argF) from Neisseria mucosa.